The chain runs to 531 residues: Pescadillo homolog (531 aa).

One can recognise a BRCT domain in the interval 309–398 (SIKTMFKGCV…RKLPTERYMP (90 aa)).

This sequence belongs to the pescadillo family.

The protein resides in the nucleus. It localises to the nucleolus. It is found in the nucleoplasm. Functionally, required for maturation of ribosomal RNAs and formation of the large ribosomal subunit. The chain is Pescadillo homolog from Caenorhabditis elegans.